A 388-amino-acid polypeptide reads, in one-letter code: Valine--pyruvate aminotransferase (388 aa).

Position 234 is an N6-(pyridoxal phosphate)lysine (K234).

The protein belongs to the class-I pyridoxal-phosphate-dependent aminotransferase family. Requires pyridoxal 5'-phosphate as cofactor.

The enzyme catalyses L-valine + pyruvate = 3-methyl-2-oxobutanoate + L-alanine. This is Valine--pyruvate aminotransferase from Mycobacterium tuberculosis (strain ATCC 25618 / H37Rv).